The following is a 236-amino-acid chain: ADTIVAVELDTYPNTDVGDPSYPHXXXXXXSVRXXTAKWNMQNGKVGTAHISYNSVGKRLSAVVSYPNGDSATVSYDVDLDNVLPEWVRVGLSASTGLYKETNTILSWSFTSKLKSNSTHETNALHFMFNQFTKDQKDLILQSDATTGTDGNLXXTRVSSNGPSQGSTVGRALFYAPVHIWESSATVAGFDATFXXLIKSPDSHPADGIAFFISNIDSSIPSGSTGRLLGLFPDAN.

Mn(2+) contacts are provided by Glu8 and Asp10. Ca(2+) is bound by residues Asp10, Tyr12, Asn14, and Asp19. Tyr12 contacts a carbohydrate. Mn(2+) is bound by residues Asp19 and His24. Position 98–99 (98–99) interacts with a carbohydrate; it reads LY. Asp207 provides a ligand contact to Ca(2+). Residue Arg227 coordinates a carbohydrate.

This sequence belongs to the leguminous lectin family. As to quaternary structure, homotetramer.

Glucose/D-mannose specific lectin. This Canavalia rosea (Beach bean) protein is Concanavalin-Ma.